Here is a 485-residue protein sequence, read N- to C-terminus: NADH-quinone oxidoreductase subunit N (485 aa).

14 helical membrane passes run 3 to 23 (LFMPEIIILITALLVIITDLF), 30 to 50 (HLAYLSLLGLGAAAVATVLNW), 67 to 87 (YASFFRILFISLSGLVIMASV), 96 to 116 (FQGEYYALVLLALLGMIMMAS), 120 to 140 (LITMYLSLELAGLAFYVLVGF), 154 to 174 (LLLGGVASAMLVFGLVLIYGF), 202 to 222 (FILGIILTITGLGFKVAAVPF), 247 to 267 (AAGFALFLRLFYTVFTDPLAL), 271 to 291 (WALIVAVLATAGMTLGNVLAI), 299 to 319 (MLGYSSIAHAGYILVALAAVG), 332 to 352 (LFYLVAFAVSDLVAFVSIIAI), 375 to 395 (ASALTLALLSLTGFPPLAGFL), 411 to 431 (WLMIVAAVNTVISAVFYFNVI), and 453 to 473 (LALGISGLAVLIFGIIPETLL).

It belongs to the complex I subunit 2 family. As to quaternary structure, NDH-1 is composed of 14 different subunits. Subunits NuoA, H, J, K, L, M, N constitute the membrane sector of the complex.

Its subcellular location is the cell membrane. It carries out the reaction a quinone + NADH + 5 H(+)(in) = a quinol + NAD(+) + 4 H(+)(out). Functionally, NDH-1 shuttles electrons from NADH, via FMN and iron-sulfur (Fe-S) centers, to quinones in the respiratory chain. The immediate electron acceptor for the enzyme in this species is believed to be ubiquinone. Couples the redox reaction to proton translocation (for every two electrons transferred, four hydrogen ions are translocated across the cytoplasmic membrane), and thus conserves the redox energy in a proton gradient. The polypeptide is NADH-quinone oxidoreductase subunit N (Dehalococcoides mccartyi (strain ATCC BAA-2100 / JCM 16839 / KCTC 5957 / BAV1)).